Reading from the N-terminus, the 271-residue chain is Protein-L-isoaspartate O-methyltransferase (271 aa).

Residues 1–15 (MRKPVTPPGNPPRPR) show a composition bias toward pro residues. The segment at 1 to 60 (MRKPVTPPGNPPRPRSPGYGSTSLAPGITAANSNTRISPPTLARPAPAAGAGGQGGNLGL) is disordered. Low complexity predominate over residues 39–49 (PPTLARPAPAA). Serine 119 is an active-site residue.

The protein belongs to the methyltransferase superfamily. L-isoaspartyl/D-aspartyl protein methyltransferase family.

It localises to the cytoplasm. The catalysed reaction is [protein]-L-isoaspartate + S-adenosyl-L-methionine = [protein]-L-isoaspartate alpha-methyl ester + S-adenosyl-L-homocysteine. In terms of biological role, catalyzes the methyl esterification of L-isoaspartyl residues in peptides and proteins that result from spontaneous decomposition of normal L-aspartyl and L-asparaginyl residues. It plays a role in the repair and/or degradation of damaged proteins. The protein is Protein-L-isoaspartate O-methyltransferase of Bordetella petrii (strain ATCC BAA-461 / DSM 12804 / CCUG 43448).